A 395-amino-acid chain; its full sequence is Tryptophan--tRNA ligase, cytoplasmic (395 aa).

Positions 91-100 (PSSDSMHLGH) match the 'HIGH' region motif. Residues 275-279 (KMSAS) carry the 'KMSKS' region motif. Phosphothreonine occurs at positions 288 and 290.

This sequence belongs to the class-I aminoacyl-tRNA synthetase family.

It is found in the cytoplasm. It carries out the reaction tRNA(Trp) + L-tryptophan + ATP = L-tryptophyl-tRNA(Trp) + AMP + diphosphate + H(+). This is Tryptophan--tRNA ligase, cytoplasmic (wrs1) from Schizosaccharomyces pombe (strain 972 / ATCC 24843) (Fission yeast).